The sequence spans 484 residues: tRNA sulfurtransferase (484 aa).

The THUMP domain occupies 63-167 (EAFAERLACI…KESLYLVSKR (105 aa)). Residues 185 to 186 (LI), Lys267, Gly289, and Gln298 each bind ATP. A disulfide bond links Cys346 and Cys458. Positions 406–484 (INSGEVIIDV…GYDNVKVYRP (79 aa)) constitute a Rhodanese domain. Cys458 functions as the Cysteine persulfide intermediate in the catalytic mechanism.

It belongs to the ThiI family.

The protein localises to the cytoplasm. The catalysed reaction is [ThiI sulfur-carrier protein]-S-sulfanyl-L-cysteine + a uridine in tRNA + 2 reduced [2Fe-2S]-[ferredoxin] + ATP + H(+) = [ThiI sulfur-carrier protein]-L-cysteine + a 4-thiouridine in tRNA + 2 oxidized [2Fe-2S]-[ferredoxin] + AMP + diphosphate. It catalyses the reaction [ThiS sulfur-carrier protein]-C-terminal Gly-Gly-AMP + S-sulfanyl-L-cysteinyl-[cysteine desulfurase] + AH2 = [ThiS sulfur-carrier protein]-C-terminal-Gly-aminoethanethioate + L-cysteinyl-[cysteine desulfurase] + A + AMP + 2 H(+). It functions in the pathway cofactor biosynthesis; thiamine diphosphate biosynthesis. In terms of biological role, catalyzes the ATP-dependent transfer of a sulfur to tRNA to produce 4-thiouridine in position 8 of tRNAs, which functions as a near-UV photosensor. Also catalyzes the transfer of sulfur to the sulfur carrier protein ThiS, forming ThiS-thiocarboxylate. This is a step in the synthesis of thiazole, in the thiamine biosynthesis pathway. The sulfur is donated as persulfide by IscS. The chain is tRNA sulfurtransferase from Shewanella woodyi (strain ATCC 51908 / MS32).